Reading from the N-terminus, the 374-residue chain is tRNA (guanine(26)-N(2))-dimethyltransferase (374 aa).

One can recognise a Trm1 methyltransferase domain in the interval 4 to 371 (IEIREGKASL…KEIDEIVNCI (368 aa)). The S-adenosyl-L-methionine site is built by arginine 44, arginine 69, aspartate 87, aspartate 113, and alanine 114. The Zn(2+) site is built by cysteine 244, cysteine 247, cysteine 261, and cysteine 264.

The protein belongs to the class I-like SAM-binding methyltransferase superfamily. Trm1 family.

The enzyme catalyses guanosine(26) in tRNA + 2 S-adenosyl-L-methionine = N(2)-dimethylguanosine(26) in tRNA + 2 S-adenosyl-L-homocysteine + 2 H(+). Functionally, dimethylates a single guanine residue at position 26 of a number of tRNAs using S-adenosyl-L-methionine as donor of the methyl groups. This is tRNA (guanine(26)-N(2))-dimethyltransferase from Sulfurisphaera tokodaii (strain DSM 16993 / JCM 10545 / NBRC 100140 / 7) (Sulfolobus tokodaii).